Here is a 252-residue protein sequence, read N- to C-terminus: Flagellar brake protein YcgR (252 aa).

The region spanning 123–238 is the PilZ domain; it reads QRREFYRVPT…TLATVQKYIT (116 aa).

It belongs to the YcgR family. Monomer. Interacts with the flagellar basal bodies.

The protein resides in the bacterial flagellum basal body. Acts as a flagellar brake, regulating swimming and swarming in a bis-(3'-5') cyclic diguanylic acid (c-di-GMP)-dependent manner. Binds 1 c-di-GMP dimer per subunit. Increasing levels of c-di-GMP lead to decreased motility. This chain is Flagellar brake protein YcgR, found in Janthinobacterium sp. (strain Marseille) (Minibacterium massiliensis).